We begin with the raw amino-acid sequence, 202 residues long: LexA repressor (202 aa).

Positions 28-48 form a DNA-binding region, H-T-H motif; it reads RAEIAQRLGFRSPNAAEEHLK. Catalysis depends on for autocatalytic cleavage activity residues Ser-119 and Lys-156.

The protein belongs to the peptidase S24 family. In terms of assembly, homodimer.

It catalyses the reaction Hydrolysis of Ala-|-Gly bond in repressor LexA.. In terms of biological role, represses a number of genes involved in the response to DNA damage (SOS response), including recA and lexA. Binds to the 16 bp palindromic sequence 5'-CTGTATATATATACAG-3'. In the presence of single-stranded DNA, RecA interacts with LexA causing an autocatalytic cleavage which disrupts the DNA-binding part of LexA, leading to derepression of the SOS regulon and eventually DNA repair. This chain is LexA repressor, found in Yersinia enterocolitica serotype O:8 / biotype 1B (strain NCTC 13174 / 8081).